Reading from the N-terminus, the 477-residue chain is Xylose isomerase (477 aa).

The active site involves H142. Mn(2+) contacts are provided by E273, E309, H312, D337, D348, D350, and D380.

Belongs to the xylose isomerase family. Requires Mn(2+) as cofactor.

The catalysed reaction is alpha-D-xylose = alpha-D-xylulofuranose. The protein is Xylose isomerase (XYLA) of Arabidopsis thaliana (Mouse-ear cress).